Consider the following 301-residue polypeptide: Syntaxin-17 (301 aa).

An N-acetylserine modification is found at serine 2. At 2–227 (SEDEEKVKLR…KNLQKAAKYK (226 aa)) the chain is on the cytoplasmic side. Lysine 41 carries the N6-acetyllysine modification. Residues 49–128 (DKLHEEHINA…QVNDEELLQP (80 aa)) adopt a coiled-coil conformation. Phosphotyrosine; by ABL1 is present on tyrosine 156. The region spanning 161–223 (IPQDQNAAES…EEGTKNLQKA (63 aa)) is the t-SNARE coiled-coil homology domain. Residues 228–248 (LAALPVAGALIGGVVGGPIGL) form a helical membrane-spanning segment. The interval 228–274 (LAALPVAGALIGGVVGGPIGLLAGFKVAGIAAALGGGVLGFTGGKLI) is necessary and sufficient for localization to autophagosome. The Lumenal segment spans residues 249–253 (LAGFK). The helical transmembrane segment at 254 to 274 (VAGIAAALGGGVLGFTGGKLI) threads the bilayer. At 275–301 (QRRKQKMMEKLTSSCPDLPSQSDKKRS) the chain is on the cytoplasmic side. Serine 288 carries the phosphoserine modification. Residues 298-301 (KKRS) carry the Endoplasmic reticulum retention signal motif.

This sequence belongs to the syntaxin family. Forms a SNARE complex composed of VAMP8, SNAP29 and STX17 involved in fusion of autophagosome with lysosome. May interact with VTI1B. Probably interacts with BET1, SCFD1 and SEC22B. Interacts with PTPN2 and ABL1; involved in STX17 phosphorylation. Interacts with COPB1. Interacts with TMED9 and TMED10; the interaction is direct. Interacts with VAMP7. Interacts with RUBCNL/PACER; promoting targeting of RUBCNL/PACER to autophagosome. Interacts with VAMP8, SNAP29, VPS39 and VPS41; these interactions are increased in the absence of TMEM39A. Interacts with IRGM; promoting STX17 recruitment to autophagosomes. Interacts with ATG8 proteins GABARAP and MAP1LC3B. Interacts with RNF115; this interaction enhances STX17 stability which in turn promotes autophagosome maturation. Interacts with RAB39A (GTP-bound); the interaction promotes autophagosome-lysosome membrane fusion driven by STX17-SNAP29-VAMP8. Interacts with RAB39B; the interaction may promote a different fonction in autophagy as compared with RAB39A. Post-translationally, dephosphorylation by PTPN2; regulates exit from the endoplasmic reticulum. Phosphorylated at Tyr-156 probably by ABL1.

The protein resides in the endoplasmic reticulum membrane. It localises to the smooth endoplasmic reticulum membrane. It is found in the endoplasmic reticulum-Golgi intermediate compartment membrane. The protein localises to the cytoplasmic vesicle. Its subcellular location is the autophagosome membrane. The protein resides in the COPII-coated vesicle membrane. It localises to the cytoplasm. It is found in the cytosol. The protein localises to the mitochondrion membrane. Its subcellular location is the autolysosome membrane. In terms of biological role, SNAREs, soluble N-ethylmaleimide-sensitive factor-attachment protein receptors, are essential proteins for fusion of cellular membranes. SNAREs localized on opposing membranes assemble to form a trans-SNARE complex, an extended, parallel four alpha-helical bundle that drives membrane fusion. STX17 is a SNARE of the autophagosome involved in autophagy through the direct control of autophagosome membrane fusion with the lysosome membrane. May also play a role in the early secretory pathway where it may maintain the architecture of the endoplasmic reticulum-Golgi intermediate compartment/ERGIC and Golgi and/or regulate transport between the endoplasmic reticulum, the ERGIC and the Golgi. In Mus musculus (Mouse), this protein is Syntaxin-17.